The primary structure comprises 389 residues: Acetyl-CoA:oxalate CoA-transferase (389 aa).

H237 is an active-site residue.

Homodimer.

It carries out the reaction oxalate + acetyl-CoA = oxalyl-CoA + acetate. Involved in the catabolism of oxalate and in the adapatation to low pH. ACOCT serves to prime the oxalate-induced acid tolerance response (ATR) cycle by producing substrate for oxalyl-CoA decarboxylase (OXC) and formyl-coenzyme A transferase (FCOCT). Catalyzes the reversible conversion of acetyl-CoA and oxalate to oxalyl-CoA and acetate. It can also use formyl-CoA and oxalate to produce oxalyl-CoA and formate with significantly reduced specific activity. In Acetobacter aceti, this protein is Acetyl-CoA:oxalate CoA-transferase (uctC).